The primary structure comprises 194 residues: Recombination protein RecR (194 aa).

The C4-type zinc-finger motif lies at 55 to 70 (CRECGNLAEGELCPIC). Residues 78 to 171 (SLLAVVESVA…RVTRPAYGLP (94 aa)) form the Toprim domain.

Belongs to the RecR family.

Functionally, may play a role in DNA repair. It seems to be involved in an RecBC-independent recombinational process of DNA repair. It may act with RecF and RecO. This chain is Recombination protein RecR, found in Thermus thermophilus (strain ATCC BAA-163 / DSM 7039 / HB27).